The following is a 2325-amino-acid chain: Protein sidekick homolog (2325 aa).

The signal sequence occupies residues 1 to 26 (MRNRLLLIFYTTTVLWTIGYTQLVLG). Residues 27–2019 (KPPIFQDGGS…IPDDPFYTTW (1993 aa)) lie on the Extracellular side of the membrane. 3 Ig-like C2-type domains span residues 28 to 105 (PPIF…AAIS), 217 to 319 (PSLQ…AYMT), and 324 to 397 (PILK…ADLA). 3 disulfide bridges follow: cysteine 52/cysteine 94, cysteine 247/cysteine 301, and cysteine 345/cysteine 386. An N-linked (GlcNAc...) asparagine glycan is attached at asparagine 407. 2 Ig-like C2-type domains span residues 456 to 544 (PSQK…VQVN) and 547 to 638 (SLIE…AMLQ). 2 disulfides stabilise this stretch: cysteine 480–cysteine 528 and cysteine 568–cysteine 622. Residues asparagine 632, asparagine 655, asparagine 807, asparagine 868, asparagine 932, and asparagine 1016 are each glycosylated (N-linked (GlcNAc...) asparagine). 13 consecutive Fibronectin type-III domains span residues 645-751 (MPER…MPQQ), 756-853 (APRN…TSEG), 858-957 (APKN…TEED), 961-1055 (SVDE…VPPE), 1059-1154 (RPSM…TLQT), 1159-1254 (PSQR…TYES), 1259-1359 (SPRN…TMED), 1363-1457 (PPES…SSVR), 1463-1566 (APAP…TLPS), 1571-1671 (QPIS…VGYS), 1673-1775 (PKRN…DKPG), 1776-1872 (PVGI…SKDG), and 1873-2004 (PPPP…TEQL). The disordered stretch occupies residues 1036 to 1059 (TRKGDGPVEETKFESGVPPELPGR). Basic and acidic residues predominate over residues 1037-1048 (RKGDGPVEETKF). Asparagine 1107 carries N-linked (GlcNAc...) asparagine glycosylation. The interval 1137–1161 (KGRGAPSEPSRSFETLQTNPDTPSQ) is disordered. Over residues 1145 to 1161 (PSRSFETLQTNPDTPSQ) the composition is skewed to polar residues. Asparagine 1614 is a glycosylation site (N-linked (GlcNAc...) asparagine). Disordered stretches follow at residues 1857-1884 (GEQR…ITSG) and 1918-1947 (PANG…ATST). Asparagine 1863 carries N-linked (GlcNAc...) asparagine glycosylation. Positions 1935 to 1947 (AKSAAQTAAATST) are enriched in low complexity. The helical transmembrane segment at 2020–2040 (WFMALVAMGAFVLIVIIIAIL) threads the bilayer. The Cytoplasmic portion of the chain corresponds to 2041–2325 (CVTGSSAKYR…NLTTGFSSFV (285 aa)). 4 disordered regions span residues 2080–2113 (NMTR…SVLG), 2164–2187 (TAYV…PTRS), 2202–2226 (RGHI…LQQP), and 2285–2325 (ILTG…SSFV). Residues 2091-2100 (PGTTQSWVSD) are compositionally biased toward polar residues. Over residues 2215–2226 (GSQPQGSPLQQP) the composition is skewed to low complexity. Polar residues-rich tracts occupy residues 2294 to 2305 (AGRSSTTDSTSE) and 2313 to 2325 (ATPN…SSFV).

The protein belongs to the sidekick family.

It localises to the membrane. In terms of biological role, cell adhesion protein. This is Protein sidekick homolog (rig-4) from Caenorhabditis elegans.